The chain runs to 411 residues: MKCDPSIAKLINNELSRQETHLELIASENFASKAVMEAQGSVLTNKYAEGLPNKRYYGGCEYIDGIEQLAIDRAKNLFGANWANVQPHSGAQANFAVFLSLLKPGDTIMGMDLSHGGHLTHGSPVNVSGKWFKTCHYEVDKKTEMLDMDAIRKKAIENQPKLIICGFSAYPRKIDFKAFRSIADEVNAYLLADIAHIAGLVASGLHPSPIPYCDVVTTTTHKTLRGPRGGLILSKDEEIGKKLDKAVFPGTQGGPLEHVIAAKAVAFQEASAPEFKIYSQKVISNAQVLSNQLQKRGISIVSKGTDNHIVLLDLRSIGMTGKVADQLVSDIKITANKNTVPFDPESPFVTSGLRLGSAALTTRGFNEQAFEDVGNIIADRLLNPNDEDIKENSINKVSELCNKFPLYSENI.

Residues Leu113 and Gly117–Leu119 contribute to the (6S)-5,6,7,8-tetrahydrofolate site. At Lys222 the chain carries N6-(pyridoxal phosphate)lysine. Residues Glu238 and Ser346 to Phe348 contribute to the (6S)-5,6,7,8-tetrahydrofolate site.

The protein belongs to the SHMT family. In terms of assembly, homodimer. It depends on pyridoxal 5'-phosphate as a cofactor.

The protein resides in the cytoplasm. The enzyme catalyses (6R)-5,10-methylene-5,6,7,8-tetrahydrofolate + glycine + H2O = (6S)-5,6,7,8-tetrahydrofolate + L-serine. It participates in one-carbon metabolism; tetrahydrofolate interconversion. Its pathway is amino-acid biosynthesis; glycine biosynthesis; glycine from L-serine: step 1/1. Its function is as follows. Catalyzes the reversible interconversion of serine and glycine with tetrahydrofolate (THF) serving as the one-carbon carrier. This reaction serves as the major source of one-carbon groups required for the biosynthesis of purines, thymidylate, methionine, and other important biomolecules. Also exhibits THF-independent aldolase activity toward beta-hydroxyamino acids, producing glycine and aldehydes, via a retro-aldol mechanism. This is Serine hydroxymethyltransferase from Prochlorococcus marinus (strain NATL1A).